The sequence spans 231 residues: Biosynthetic peptidoglycan transglycosylase (231 aa).

A helical transmembrane segment spans residues 7-27; it reads LLFWLILVPILLVLLMQLYFF.

This sequence belongs to the glycosyltransferase 51 family.

The protein resides in the cell inner membrane. The enzyme catalyses [GlcNAc-(1-&gt;4)-Mur2Ac(oyl-L-Ala-gamma-D-Glu-L-Lys-D-Ala-D-Ala)](n)-di-trans,octa-cis-undecaprenyl diphosphate + beta-D-GlcNAc-(1-&gt;4)-Mur2Ac(oyl-L-Ala-gamma-D-Glu-L-Lys-D-Ala-D-Ala)-di-trans,octa-cis-undecaprenyl diphosphate = [GlcNAc-(1-&gt;4)-Mur2Ac(oyl-L-Ala-gamma-D-Glu-L-Lys-D-Ala-D-Ala)](n+1)-di-trans,octa-cis-undecaprenyl diphosphate + di-trans,octa-cis-undecaprenyl diphosphate + H(+). Its pathway is cell wall biogenesis; peptidoglycan biosynthesis. Peptidoglycan polymerase that catalyzes glycan chain elongation from lipid-linked precursors. The protein is Biosynthetic peptidoglycan transglycosylase of Herminiimonas arsenicoxydans.